Reading from the N-terminus, the 364-residue chain is Mannonate dehydratase (364 aa).

The protein belongs to the mannonate dehydratase family. The cofactor is Fe(2+). Mn(2+) is required as a cofactor.

It catalyses the reaction D-mannonate = 2-dehydro-3-deoxy-D-gluconate + H2O. Its pathway is carbohydrate metabolism; pentose and glucuronate interconversion. Its function is as follows. Catalyzes the dehydration of D-mannonate. The protein is Mannonate dehydratase of Endomicrobium trichonymphae.